We begin with the raw amino-acid sequence, 521 residues long: MSLFKIRMPETVAEGTRLALRAFSLVVAVDEHGGIGDGRSIPWNVPEDMKFFRDLTTKLRGKNVKPSPAKRNAVVMGRKTWDSIPPKFRPLPGRLNVVLSSTLTTQHLLDGLPDEEKRNLHADSIVAVNGGLEQALRLLASPNYTPSIETVYCIGGGSVYAEALRPPCVHLLQAIYRTTIRASESSCSVFFRVPESGTEAAAGIEWQRETISEELTSANGNETKYYFEKLIPRNREEEQYLSLVDRIIREGNVKHDRTGVGTLSIFGAQMRFSLRNNRLPLLTTKRVFWRGVCEELLWFLRGETYAKKLSDKGVHIWDDNGSRAFLDSRGLTEYEEMDLGPVYGFQWRHFGAAYTHHDANYDGQGVDQIKAIVETLKTNPDDRRMLFTAWNPSALPRMALPPCHLLAQFYVSNGELSCMLYQRSCDMGLGVPFNIASYALLTILIAKATGLRPGELVHTLGDAHVYSNHVEPCNEQLKRVPRAFPYLVFRREREFLEDYEEGDMEVIDYAPYPPISMKMAV.

A DHFR domain is found at 22-232; it reads AFSLVVAVDE…TKYYFEKLIP (211 aa). Position 26 (V26) interacts with substrate. NADP(+) contacts are provided by residues A28 and 34–40; that span reads GIGDGRS. D48 lines the substrate pocket. Residues 78–80 and 99–102 each bind NADP(+); these read RKT and LSST. Substrate is bound by residues I154, Y160, and T178. An NADP(+)-binding site is contributed by 155 to 162; it reads GGGSVYAE. Positions 237-521 are thymidylate synthase; sequence EEQYLSLVDR…YPPISMKMAV (285 aa). A dUMP-binding site is contributed by R257. Residue C403 is part of the active site. DUMP contacts are provided by residues H404, 422–426, N434, and 464–466; these read QRSCD and HVY.

The protein in the N-terminal section; belongs to the dihydrofolate reductase family. In the C-terminal section; belongs to the thymidylate synthase family. In terms of assembly, homodimer.

The catalysed reaction is (6S)-5,6,7,8-tetrahydrofolate + NADP(+) = 7,8-dihydrofolate + NADPH + H(+). It catalyses the reaction dUMP + (6R)-5,10-methylene-5,6,7,8-tetrahydrofolate = 7,8-dihydrofolate + dTMP. It participates in cofactor biosynthesis; tetrahydrofolate biosynthesis; 5,6,7,8-tetrahydrofolate from 7,8-dihydrofolate: step 1/1. Its function is as follows. Bifunctional enzyme. Involved in de novo dTMP biosynthesis. Key enzyme in folate metabolism. Catalyzes an essential reaction for de novo glycine and purine synthesis, DNA precursor synthesis, and for the conversion of dUMP to dTMP. This chain is Bifunctional dihydrofolate reductase-thymidylate synthase, found in Trypanosoma cruzi.